Here is a 343-residue protein sequence, read N- to C-terminus: Ricin B-like lectin R40G2 (343 aa).

A Ricin B-type lectin domain is found at 194-340 (TVRVFSAAGE…CEGDNQRWKI (147 aa)).

Lectin which binds carbohydrates in vitro. Interacts through its lectin domain with glycan structures containing specific motifs. The chain is Ricin B-like lectin R40G2 from Oryza sativa subsp. japonica (Rice).